A 442-amino-acid chain; its full sequence is Tyrosine--tRNA ligase (442 aa).

Y55 serves as a coordination point for L-tyrosine. Positions 60-69 (PTAPSLHLGN) match the 'HIGH' region motif. The L-tyrosine site is built by Y190 and Q194. The 'KMSKS' region motif lies at 250-254 (KFGKS). K253 is a binding site for ATP. The 66-residue stretch at 373–438 (VAIAQALVDT…GKKTLAGVFV (66 aa)) folds into the S4 RNA-binding domain.

This sequence belongs to the class-I aminoacyl-tRNA synthetase family. TyrS type 1 subfamily. As to quaternary structure, homodimer.

It is found in the cytoplasm. It catalyses the reaction tRNA(Tyr) + L-tyrosine + ATP = L-tyrosyl-tRNA(Tyr) + AMP + diphosphate + H(+). Catalyzes the attachment of tyrosine to tRNA(Tyr) in a two-step reaction: tyrosine is first activated by ATP to form Tyr-AMP and then transferred to the acceptor end of tRNA(Tyr). In Leifsonia xyli subsp. xyli (strain CTCB07), this protein is Tyrosine--tRNA ligase.